Consider the following 278-residue polypeptide: Release factor glutamine methyltransferase (278 aa).

Residues Gly117 to Gly121, Asp140, and Asn184 contribute to the S-adenosyl-L-methionine site. Asn184–Tyr187 is a binding site for substrate.

The protein belongs to the protein N5-glutamine methyltransferase family. PrmC subfamily.

It carries out the reaction L-glutaminyl-[peptide chain release factor] + S-adenosyl-L-methionine = N(5)-methyl-L-glutaminyl-[peptide chain release factor] + S-adenosyl-L-homocysteine + H(+). In terms of biological role, methylates the class 1 translation termination release factors RF1/PrfA and RF2/PrfB on the glutamine residue of the universally conserved GGQ motif. The protein is Release factor glutamine methyltransferase of Staphylococcus aureus (strain NCTC 8325 / PS 47).